The chain runs to 283 residues: Cyclic AMP-dependent transcription factor ATF-5 (283 aa).

The required for protein stabilization induced by IL1B stretch occupies residues 1 to 21 (MSLLATLGLELDRALLPASGL). Lys29 bears the N6-acetyllysine; by EP300 mark. Disordered regions lie at residues 118 to 154 (DAPL…PQPP) and 168 to 241 (SEAG…EGEC). The segment at 119–218 (APLLPPPSPP…GDRKQKKRDQ (100 aa)) is interaction with PTP4A1. Pro residues-rich tracts occupy residues 121 to 145 (LLPP…PLPL) and 183 to 203 (PQQP…PYPS). The region spanning 209 to 272 (GDRKQKKRDQ…QYVKDLLIEV (64 aa)) is the bZIP domain. The basic motif stretch occupies residues 211 to 231 (RKQKKRDQNKSAALRYRQRKR). The interval 237–251 (LEGECQGLEARNREL) is leucine-zipper. Ser257 is modified (phosphoserine).

It belongs to the bZIP family. In terms of assembly, binds DNA as a dimer. Interacts with PTP4A1/PRL-1. Interacts with CCND3, but not with CCND1 or CCND2. Interacts with HSPA1A or HSPA1B; the interaction protects ATF5 from degradation via proteasome-dependent and caspase-dependent processes. Interacts (via C-terminal region) with NPM1 (via C-terminal region); the interaction leads to loss of association between HSPA1A or HSPA1B and ATF5 and promotes ATF5 degradation via proteasome-dependent and caspase-dependent processes. Interacts with NLK; the interaction stabilizes ATF5 at the protein level in a kinase-independent manner. Interacts with alpha-tubulin, gamma-tubulin members TUBGCP2 and TUBGCP4, PCNT; the ATF5:PCNT:polyglutamylated tubulin (PGT) tripartite unites the mother centriole and the pericentriolar material (PCM) in the centrosome. Interacts with CEBPB and EP300; EP300 is required for ATF5 and CEBPB interaction and DNA binding. In terms of processing, acetylated at Lys-29 by EP300, the acetylation enhances the interaction with CEBPB, DNA-binding and transactivation activity. Ubiquitinated by CDC34 and UBE2B in order to be degraded by the proteasome. Cisplatin inhibits ubiquitination and proteasome-mediated degradation by inhibiting the interaction with CDC34. Ubiquitination and degradation by the proteasome are inhibited by NLK in a kinase-independent manner. Post-translationally, phosphorylated by NLK, probably at Ser-92 and Ser-126. Highly expressed in liver and at lower levels in heart, brain, lung, kidney, adipose tissue, and skeletal muscle. Expressed in some immature and in all mature olfactory sensory neurons (at protein level).

It localises to the cytoplasm. It is found in the nucleus. The protein resides in the cytoskeleton. The protein localises to the microtubule organizing center. Its subcellular location is the centrosome. In terms of biological role, transcription factor that either stimulates or represses gene transcription through binding of different DNA regulatory elements such as cAMP response element (CRE) (consensus: 5'-GTGACGT[AC][AG]-3'), ATF5-specific response element (ARE) (consensus: 5'-C[CT]TCT[CT]CCTT[AT]-3') but also the amino acid response element (AARE), present in many viral and cellular promoters. Critically involved, often in a cell type-dependent manner, in cell survival, proliferation, and differentiation. Its transcriptional activity is enhanced by CCND3 and slightly inhibited by CDK4. Important regulator of the cerebral cortex formation, functions in cerebral cortical neuroprogenitor cells to maintain proliferation and to block differentiation into neurons. Must be down-regulated in order for such cells to exit the cycle and differentiate. Participates in the pathways by which SHH promotes cerebellar granule neuron progenitor cells proliferation. Critical for survival of mature olfactory sensory neurons (OSN), directs expression of OSN-specific genes. May be involved in osteogenic differentiation. Promotes cell proliferation and survival by inducing the expression of EGR1 sinergistically with ELK1. Once acetylated by EP300, binds to ARE sequences on target genes promoters, such as BCL2 and EGR1. Plays an anti-apoptotic role through the transcriptional regulation of BCL2, this function seems to be cell type-dependent. Cooperates with NR1I3/CAR in the transcriptional activation of CYP2B6 in liver. In hepatic cells, represses CRE-dependent transcription and inhibits proliferation by blocking at G2/M phase. May act as a negative regulator of IL1B transduction pathway in liver. Upon IL1B stimulus, cooperates with NLK to activate the transactivation activity of C/EBP subfamily members. Besides its function of transcription factor, acts as a cofactor of CEBPB to activate CEBPA and promote adipocyte differentiation. Regulates centrosome dynamics in a cell-cycle- and centriole-age-dependent manner. Forms 9-foci symmetrical ring scaffold around the mother centriole to control centrosome function and the interaction between centrioles and pericentriolar material. The sequence is that of Cyclic AMP-dependent transcription factor ATF-5 (Atf5) from Mus musculus (Mouse).